Consider the following 267-residue polypeptide: Formamidopyrimidine-DNA glycosylase (267 aa).

Residue proline 2 is the Schiff-base intermediate with DNA of the active site. The active-site Proton donor is glutamate 3. Residue lysine 58 is the Proton donor; for beta-elimination activity of the active site. DNA-binding residues include histidine 91, arginine 110, and arginine 152. The FPG-type zinc finger occupies 233–267; that stretch reads DVYGRGTDACTRCGGALEEIRLGNRSTVFCPRCQT. The Proton donor; for delta-elimination activity role is filled by arginine 257.

Belongs to the FPG family. Monomer. Requires Zn(2+) as cofactor.

It catalyses the reaction Hydrolysis of DNA containing ring-opened 7-methylguanine residues, releasing 2,6-diamino-4-hydroxy-5-(N-methyl)formamidopyrimidine.. The enzyme catalyses 2'-deoxyribonucleotide-(2'-deoxyribose 5'-phosphate)-2'-deoxyribonucleotide-DNA = a 3'-end 2'-deoxyribonucleotide-(2,3-dehydro-2,3-deoxyribose 5'-phosphate)-DNA + a 5'-end 5'-phospho-2'-deoxyribonucleoside-DNA + H(+). Its function is as follows. Involved in base excision repair of DNA damaged by oxidation or by mutagenic agents. Acts as a DNA glycosylase that recognizes and removes damaged bases. Has a preference for oxidized purines, such as 7,8-dihydro-8-oxoguanine (8-oxoG). Has AP (apurinic/apyrimidinic) lyase activity and introduces nicks in the DNA strand. Cleaves the DNA backbone by beta-delta elimination to generate a single-strand break at the site of the removed base with both 3'- and 5'-phosphates. The protein is Formamidopyrimidine-DNA glycosylase of Geobacter metallireducens (strain ATCC 53774 / DSM 7210 / GS-15).